A 297-amino-acid polypeptide reads, in one-letter code: Carbamate kinase (297 aa).

This sequence belongs to the carbamate kinase family.

It is found in the cytoplasm. It catalyses the reaction hydrogencarbonate + NH4(+) + ATP = carbamoyl phosphate + ADP + H2O + H(+). The enzyme catalyses carbamate + ATP = carbamoyl phosphate + ADP. It carries out the reaction hydrogencarbonate + NH4(+) = carbamate + H2O + H(+). It functions in the pathway nitrogen metabolism; (S)-allantoin degradation. Kinase involved in the anaerobic nitrogen utilization via the assimilation of allantoin. Catalyzes the transfer of a phosphate group from carbamoyl phosphate to ADP to produce ATP and leave carbamate, which spontaneously hydrolyzes to ammonia and hydrogencarbonate. The sequence is that of Carbamate kinase from Escherichia coli O157:H7.